Consider the following 301-residue polypeptide: Hydroxymycolate synthase MmaA4 (301 aa).

S-adenosyl-L-methionine contacts are provided by residues 42–43 (YS), 81–83 (GCG), 103–108 (TLSKNQ), 132–133 (WE), and isoleucine 145. Cysteine 278 is an active-site residue.

This sequence belongs to the CFA/CMAS family. As to quaternary structure, monomer.

It functions in the pathway lipid metabolism; mycolic acid biosynthesis. Involved in the biosynthesis of hydroxymycolate, a common precursor of oxygenated mycolic acids (methoxymycolate and ketomycolate). Probably transfers a methyl group from the S-adenosylmethionine (SAM) cofactor and, subsequently or simultaneously, a water molecule onto the double bound of ethylene substrates, leading to the formation of the hydroxylated product at the distal position. The sequence is that of Hydroxymycolate synthase MmaA4 (cmaA) from Mycobacterium bovis (strain ATCC BAA-935 / AF2122/97).